A 303-amino-acid chain; its full sequence is Small ribosomal subunit protein uS2 (303 aa).

Residues 267 to 303 form a disordered region; the sequence is AESLSMAEEPAPPSQRKGPASETAEPVAEPAVTESGS.

It belongs to the universal ribosomal protein uS2 family.

The chain is Small ribosomal subunit protein uS2 from Solibacter usitatus (strain Ellin6076).